The following is a 187-amino-acid chain: Putative adenylate kinase (187 aa).

G10, G12, K13, T14, and I15 together coordinate ATP. Residues 30 to 53 (SLSQFVIENKLYTEYDELRQSYII) are NMP. Residues 103–113 (GRGWADIKVAE) form an LID region. R104 is an ATP binding site.

This sequence belongs to the adenylate kinase family. AK6 subfamily. Interacts with uS11. Not a structural component of 40S pre-ribosomes, but transiently interacts with them by binding to uS11.

It catalyses the reaction AMP + ATP = 2 ADP. The enzyme catalyses ATP + H2O = ADP + phosphate + H(+). In terms of biological role, broad-specificity nucleoside monophosphate (NMP) kinase that catalyzes the reversible transfer of the terminal phosphate group between nucleoside triphosphates and monophosphates. Also has ATPase activity. Involved in the late maturation steps of the 30S ribosomal particles, specifically 16S rRNA maturation. While NMP activity is not required for ribosome maturation, ATPase activity is. Associates transiently with small ribosomal subunit protein uS11. ATP hydrolysis breaks the interaction with uS11. May temporarily remove uS11 from the ribosome to enable a conformational change of the ribosomal RNA that is needed for the final maturation step of the small ribosomal subunit. The sequence is that of Putative adenylate kinase from Saccharolobus islandicus (strain L.S.2.15 / Lassen #1) (Sulfolobus islandicus).